Consider the following 115-residue polypeptide: Protein TrbA (115 aa).

The next 4 helical transmembrane spans lie at 5–25 (YLKM…GYFF), 39–59 (LVFL…LWFL), 60–80 (CGAI…AALP), and 91–111 (IFIC…FIRG).

The protein resides in the cell membrane. This is Protein TrbA (trbA) from Escherichia coli (strain K12).